We begin with the raw amino-acid sequence, 574 residues long: Cholinesterase (574 aa).

A glycan (N-linked (GlcNAc...) asparagine) is linked at asparagine 57. Residues cysteine 65 and cysteine 92 are joined by a disulfide bond. The N-linked (GlcNAc...) asparagine glycan is linked to asparagine 106. 116–117 serves as a coordination point for substrate; the sequence is GG. Catalysis depends on serine 198, which acts as the Acyl-ester intermediate. A Phosphoserine modification is found at serine 198. Residues asparagine 241 and asparagine 256 are each glycosylated (N-linked (GlcNAc...) asparagine). Cysteine 252 and cysteine 263 form a disulfide bridge. Residue glutamate 325 is the Charge relay system of the active site. Residue asparagine 341 is glycosylated (N-linked (GlcNAc...) asparagine). Cysteines 400 and 519 form a disulfide. The active-site Charge relay system is histidine 438. Asparagine 455, asparagine 481, and asparagine 486 each carry an N-linked (GlcNAc...) asparagine glycan.

It belongs to the type-B carboxylesterase/lipase family. Homotetramer; disulfide-linked. Dimer of dimers. In terms of tissue distribution, detected in blood plasma (at protein level). Present in most cells except erythrocytes.

It is found in the secreted. The enzyme catalyses an acylcholine + H2O = a carboxylate + choline + H(+). Its function is as follows. Esterase with broad substrate specificity. Contributes to the inactivation of the neurotransmitter acetylcholine. Can degrade neurotoxic organophosphate esters. This is Cholinesterase (BCHE) from Equus caballus (Horse).